A 733-amino-acid chain; its full sequence is MSLITVDQANRVFHLHNQTLSYIFAVEQGGTLSHLYFGGHVDHYHGELRYPRVDRGFSGNLPGSTDRTFSRDTLPKEYSTAGEMDYHLPAAIVRHTDGANALYLVYQGYRIEAGKPKLSGLPAAFVEDETEAETLTIVLVDQVSQVEFDLQYTIYRDRPVVTRSVQVCNQGDHAVNLEKVASMQIDFTDRQFETITLPGAHANERHPERGSINYGIQTFGSLRGTSSHQMNPFLALVDHTTTEFSGDAYGFNLVYSGNHAFELEKDQLDQLHLMVGINSYNFNWQLKAGATFQTPEVLMVYTNKGLNAMSQAYHHLIRERVVRSEFKNQERPIVVNNWEATFFDFNEAKLKPIVDEAKQLGIEMFVLDDGWFGHRDDDNSSLGDWQVDHRKFPQGLNHFVKYVHEQGLKFGIWLEPEMISYDSKLYQQHPDYLMQVPGRSPSPSRNQYILDLGRQAVRNNIFDQLDQLLKSKQIDYIKWDMNRHLSDIYSVALPPERQGEVYHRYVLGLYELLERLTTAYPHILFEGCSGGGGRFDAGMAYYMPQIWASDNTDAVARLTIQYGTSLAYPISLATAHVSVSPNQQTGRETSMSTRSAVAASGVLGYELDLTQLSSADKQIVQKQVVQYKQIRPLIQFGEFYRLKSPITSNQAAWMFVSPQQDEAIVMVFNLTSYAQPSLTKTKLVGLNPKLNYQNIATKAIFGGDELMQLGFYDPVVYQDYTTKVYHFKAVTEN.

The active-site Nucleophile is the D480. D550 serves as the catalytic Proton donor.

Belongs to the glycosyl hydrolase 36 family.

The enzyme catalyses Hydrolysis of terminal, non-reducing alpha-D-galactose residues in alpha-D-galactosides, including galactose oligosaccharides, galactomannans and galactolipids.. In terms of biological role, alpha-galactosidase associated with the raffinose operon. This chain is Alpha-galactosidase 1 (agaR), found in Pediococcus pentosaceus.